A 549-amino-acid chain; its full sequence is 4-hydroxybutyrate--CoA ligase 2 (549 aa).

ATP contacts are provided by residues 195–203 (TSGTTGLPK), 336–341 (ETYGPH), aspartate 425, and arginine 440. CoA is bound by residues 448 to 450 (GGE), lysine 506, and 514 to 516 (CPK). Lysine 530 contacts ATP.

This sequence belongs to the ATP-dependent AMP-binding enzyme family. Mg(2+) is required as a cofactor. The cofactor is Mn(2+).

It carries out the reaction 4-hydroxybutanoate + ATP + CoA = 4-hydroxybutanoyl-CoA + AMP + diphosphate. The catalysed reaction is acetate + ATP + CoA = acetyl-CoA + AMP + diphosphate. The enzyme catalyses propanoate + ATP + CoA = propanoyl-CoA + AMP + diphosphate. It catalyses the reaction a medium-chain fatty acid + ATP + CoA = a medium-chain fatty acyl-CoA + AMP + diphosphate. Its function is as follows. Catalyzes the ligation of coenzyme A (CoA) to 4-hydroxybutyrate (4HB). It can also use butyrate, valerate, propionate, acetate and 3-hydroxybutyrate (3HB) as substrates. This is 4-hydroxybutyrate--CoA ligase 2 from Metallosphaera sedula (strain ATCC 51363 / DSM 5348 / JCM 9185 / NBRC 15509 / TH2).